The chain runs to 97 residues: Putative defensin-like protein 240 (97 aa).

The first 23 residues, 1-23 (MRYTTSFIVFCFYIFLFTNLVQG), serve as a signal peptide directing secretion. Disulfide bonds link Cys-29/Cys-88, Cys-39/Cys-69, Cys-47/Cys-85, and Cys-67/Cys-87.

This sequence belongs to the DEFL family.

Its subcellular location is the secreted. In Arabidopsis thaliana (Mouse-ear cress), this protein is Putative defensin-like protein 240 (SCRL18).